A 336-amino-acid polypeptide reads, in one-letter code: Cycloartenol-C-24-methyltransferase (336 aa).

Met1 bears the N-acetylmethionine mark.

It belongs to the class I-like SAM-binding methyltransferase superfamily. Erg6/SMT family. In terms of tissue distribution, highly expressed in vascular tissue, mature leaves and in regions undergoing cellular expansion.

It catalyses the reaction cycloartenol + S-adenosyl-L-methionine = 24-methylenecycloartanol + S-adenosyl-L-homocysteine + H(+). It participates in steroid biosynthesis; sterol biosynthesis. Its function is as follows. Catalyzes the methyl transfer from S-adenosyl-methionine to the C-24 of cycloartenol to form 24-methylene cycloartenol. The sequence is that of Cycloartenol-C-24-methyltransferase (SMT1) from Arabidopsis thaliana (Mouse-ear cress).